The chain runs to 61 residues: UPF0434 protein MS0934 (61 aa).

Belongs to the UPF0434 family.

This is UPF0434 protein MS0934 from Mannheimia succiniciproducens (strain KCTC 0769BP / MBEL55E).